The chain runs to 170 residues: MIIYKDLLSGDEMFSNIYKIRELEGGILLEVEGKRITRTEAIDDSAFGANPSAEELSEANEAAVSSGVDIILNHKLISTLYNKKQYSAYIKKYMKDLKTKLEETNPERVDAFVAGAVGAVKMILGKFKDFEFYTGESMNHDAMVGLLDYREDGITPIMLFFKDGLEIEKC.

The TCTP domain maps to 1–170 (MIIYKDLLSG…FKDGLEIEKC (170 aa)).

The protein belongs to the TCTP family.

Its subcellular location is the cytoplasm. Its function is as follows. Involved in calcium binding and microtubule stabilization. The sequence is that of Translationally-controlled tumor protein homolog (tpt1) from Scophthalmus maximus (Turbot).